A 279-amino-acid chain; its full sequence is Oxygen-dependent coproporphyrinogen-III oxidase (279 aa).

S102 contacts substrate. A divalent metal cation-binding residues include H106 and H116. Catalysis depends on H116, which acts as the Proton donor. Residue 118-120 (NTR) participates in substrate binding. 2 residues coordinate a divalent metal cation: H149 and H179. The tract at residues 244–279 (YVEFNLLYDRGTKFGLMTDGNVEAILMSLPPEVKFN) is important for dimerization.

This sequence belongs to the aerobic coproporphyrinogen-III oxidase family. Homodimer. A divalent metal cation serves as cofactor.

The protein localises to the cytoplasm. It carries out the reaction coproporphyrinogen III + O2 + 2 H(+) = protoporphyrinogen IX + 2 CO2 + 2 H2O. The protein operates within porphyrin-containing compound metabolism; protoporphyrin-IX biosynthesis; protoporphyrinogen-IX from coproporphyrinogen-III (O2 route): step 1/1. Functionally, involved in the heme biosynthesis. Catalyzes the aerobic oxidative decarboxylation of propionate groups of rings A and B of coproporphyrinogen-III to yield the vinyl groups in protoporphyrinogen-IX. This chain is Oxygen-dependent coproporphyrinogen-III oxidase, found in Rickettsia peacockii (strain Rustic).